A 430-amino-acid polypeptide reads, in one-letter code: Long-chain specific acyl-CoA dehydrogenase, mitochondrial (430 aa).

A mitochondrion-targeting transit peptide spans 1–30 (MAARLLRGSLRVLGGHRAPRQLPAARCSHS). At Lys42 the chain carries N6-acetyllysine. Phosphoserine is present on Ser54. Lys66 and Lys81 each carry N6-acetyllysine; alternate. An N6-succinyllysine; alternate mark is found at Lys66 and Lys81. N6-acetyllysine occurs at positions 92 and 95. N6-succinyllysine is present on Lys165. Residues 170–179 (IAMTEPGAGS) and 203–205 (FIS) contribute to the FAD site. Residue Ser179 coordinates substrate. A substrate-binding site is contributed by 227-228 (AH). The residue at position 240 (Lys240) is an N6-succinyllysine. Residues Lys254 and Lys279 each carry the N6-acetyllysine; alternate modification. An N6-succinyllysine; alternate mark is found at Lys254 and Lys279. Substrate contacts are provided by residues Tyr282 and 289 to 292 (PQER). Catalysis depends on Glu291, which acts as the Proton acceptor. Arg317 contributes to the FAD binding site. Lys318 carries the N6-acetyllysine modification. Position 322 is an N6-acetyllysine; alternate (Lys322). Lys322 carries the N6-succinyllysine; alternate modification. FAD is bound at residue Gln328. N6-acetyllysine is present on Lys358. Ser362 carries the post-translational modification Phosphoserine. 385–389 (QLHGG) lines the FAD pocket. 412-413 (GG) contributes to the substrate binding site. 414-416 (TNE) contacts FAD.

Belongs to the acyl-CoA dehydrogenase family. In terms of assembly, homotetramer. Requires FAD as cofactor. Acetylation at Lys-318 and Lys-322 in proximity of the cofactor-binding sites strongly reduces catalytic activity. These sites are deacetylated by SIRT3.

It localises to the mitochondrion matrix. It catalyses the reaction a long-chain 2,3-saturated fatty acyl-CoA + oxidized [electron-transfer flavoprotein] + H(+) = a long-chain (2E)-enoyl-CoA + reduced [electron-transfer flavoprotein]. The catalysed reaction is hexanoyl-CoA + oxidized [electron-transfer flavoprotein] + H(+) = (2E)-hexenoyl-CoA + reduced [electron-transfer flavoprotein]. The enzyme catalyses octanoyl-CoA + oxidized [electron-transfer flavoprotein] + H(+) = (2E)-octenoyl-CoA + reduced [electron-transfer flavoprotein]. It carries out the reaction decanoyl-CoA + oxidized [electron-transfer flavoprotein] + H(+) = (2E)-decenoyl-CoA + reduced [electron-transfer flavoprotein]. It catalyses the reaction dodecanoyl-CoA + oxidized [electron-transfer flavoprotein] + H(+) = (2E)-dodecenoyl-CoA + reduced [electron-transfer flavoprotein]. The catalysed reaction is tetradecanoyl-CoA + oxidized [electron-transfer flavoprotein] + H(+) = (2E)-tetradecenoyl-CoA + reduced [electron-transfer flavoprotein]. The enzyme catalyses oxidized [electron-transfer flavoprotein] + hexadecanoyl-CoA + H(+) = (2E)-hexadecenoyl-CoA + reduced [electron-transfer flavoprotein]. It carries out the reaction octadecanoyl-CoA + oxidized [electron-transfer flavoprotein] + H(+) = (2E)-octadecenoyl-CoA + reduced [electron-transfer flavoprotein]. It catalyses the reaction eicosanoyl-CoA + oxidized [electron-transfer flavoprotein] + H(+) = (2E)-eicosenoyl-CoA + reduced [electron-transfer flavoprotein]. The catalysed reaction is docosanoyl-CoA + oxidized [electron-transfer flavoprotein] + H(+) = (2E)-docosenoyl-CoA + reduced [electron-transfer flavoprotein]. The enzyme catalyses tetracosanoyl-CoA + oxidized [electron-transfer flavoprotein] + H(+) = (2E)-tetracosenoyl-CoA + reduced [electron-transfer flavoprotein]. It carries out the reaction (5E)-tetradecenoyl-CoA + oxidized [electron-transfer flavoprotein] + H(+) = (2E,5E)-tetradecadienoyl-CoA + reduced [electron-transfer flavoprotein]. It catalyses the reaction (5Z)-tetradecenoyl-CoA + oxidized [electron-transfer flavoprotein] + H(+) = (2E,5Z)-tetradecadienoyl-CoA + reduced [electron-transfer flavoprotein]. The catalysed reaction is oxidized [electron-transfer flavoprotein] + (9Z)-octadecenoyl-CoA + H(+) = (2E,9Z)-octadecadienoyl-CoA + reduced [electron-transfer flavoprotein]. Its pathway is lipid metabolism; mitochondrial fatty acid beta-oxidation. Its function is as follows. Long-chain specific acyl-CoA dehydrogenase is one of the acyl-CoA dehydrogenases that catalyze the first step of mitochondrial fatty acid beta-oxidation, an aerobic process breaking down fatty acids into acetyl-CoA and allowing the production of energy from fats. The first step of fatty acid beta-oxidation consists in the removal of one hydrogen from C-2 and C-3 of the straight-chain fatty acyl-CoA thioester, resulting in the formation of trans-2-enoyl-CoA. Among the different mitochondrial acyl-CoA dehydrogenases, long-chain specific acyl-CoA dehydrogenase can act on saturated and unsaturated acyl-CoAs with 6 to 24 carbons with a preference for 8 to 18 carbons long primary chains. This chain is Long-chain specific acyl-CoA dehydrogenase, mitochondrial, found in Homo sapiens (Human).